Consider the following 301-residue polypeptide: Acetylglutamate kinase (301 aa).

Residues 64-65 (GG), Arg-86, and Asn-181 each bind substrate.

It belongs to the acetylglutamate kinase family. ArgB subfamily.

The protein localises to the cytoplasm. It catalyses the reaction N-acetyl-L-glutamate + ATP = N-acetyl-L-glutamyl 5-phosphate + ADP. It functions in the pathway amino-acid biosynthesis; L-arginine biosynthesis; N(2)-acetyl-L-ornithine from L-glutamate: step 2/4. In terms of biological role, catalyzes the ATP-dependent phosphorylation of N-acetyl-L-glutamate. The sequence is that of Acetylglutamate kinase from Aliarcobacter butzleri (strain RM4018) (Arcobacter butzleri).